A 224-amino-acid polypeptide reads, in one-letter code: Thiamine-triphosphatase (224 aa).

N-acetylalanine is present on Ala-2. The region spanning 5–201 is the CYTH domain; it reads LIEVERKFTP…AKLLVYLQRF (197 aa). Residues Glu-7 and Glu-9 each contribute to the Mg(2+) site. Substrate is bound by residues Lys-11, Arg-55, Arg-57, Lys-65, and Arg-125. Residues Asp-145, Glu-157, and Glu-159 each contribute to the Mg(2+) site. Residue Glu-157 coordinates substrate. Lys-193 is a binding site for substrate.

The protein belongs to the ThTPase family. Monomer. It depends on Mg(2+) as a cofactor.

The protein localises to the cytoplasm. It carries out the reaction thiamine triphosphate + H2O = thiamine diphosphate + phosphate + H(+). Its function is as follows. Hydrolase highly specific for thiamine triphosphate (ThTP). In Rattus norvegicus (Rat), this protein is Thiamine-triphosphatase (Thtpa).